The sequence spans 274 residues: Remorin 4.2 (274 aa).

The span at 1–30 (MLTLYHQERSPDATSNDRDETPETVVREVH) shows a compositional bias: basic and acidic residues. Disordered stretches follow at residues 1–71 (MLTL…EGEN), 117–157 (TDHE…TVQR), and 218–245 (AMEK…AKRG). Composition is skewed to polar residues over residues 61–71 (RSATTMSEGEN) and 145–156 (GPGQSRVGSTVQ). Residues 204-239 (MKKIERKLEERKAKAMEKTQNNVAKAQRKAEERRAT) are a coiled coil. A compositionally biased stretch (basic and acidic residues) spans 231 to 245 (RKAEERRATAEAKRG).

Belongs to the remorin family. As to quaternary structure, forms homodimer and heterodimer with REM4.1. Interacts with KIN11. Post-translationally, probably ubiquitinated and degraded by the 26S proteasome pathway. Predominantly detected in bud, stem, root, flower, silique, and leaves, and enhanced dramatically in senescence leaf.

The protein localises to the cell membrane. Collaborates with REM4.1 to positively regulate the BCTV and BSCTV susceptibility. This is Remorin 4.2 from Arabidopsis thaliana (Mouse-ear cress).